A 449-amino-acid chain; its full sequence is Tripartite motif-containing protein 64 (449 aa).

The RING-type zinc-finger motif lies at 15–56 (CCICVNYFIDPVTIDCGHSFCRPCLCLCSEEGRAPMRCPSCR). The B box-type zinc finger occupies 87-128 (SSDNICVLHEETKELFCEADKRLLCGPCSESPEHMAHSHSPI). The Zn(2+) site is built by C92, H95, C114, and H120. Residues 189–225 (LDEEEQRHLQALEREAEELFQQLQDSQVRMTQHLERM) adopt a coiled-coil conformation. Residues 269–449 (LTSWCITGVL…LRPFFCFGCT (181 aa)) enclose the B30.2/SPRY domain.

It belongs to the TRIM/RBCC family.

The chain is Tripartite motif-containing protein 64 (TRIM64) from Homo sapiens (Human).